Consider the following 308-residue polypeptide: Oxygen-dependent coproporphyrinogen-III oxidase (308 aa).

Residue serine 100 participates in substrate binding. A divalent metal cation-binding residues include histidine 104 and histidine 114. Residue histidine 114 is the Proton donor of the active site. A substrate-binding site is contributed by 116-118; that stretch reads NFR. A divalent metal cation contacts are provided by histidine 153 and histidine 183. The interval 248–283 is important for dimerization; it reads YVEFNLVFDRGTIFGLQSGGRTESILSSMPPMATWK. Residue 266-268 participates in substrate binding; it reads GGR.

Belongs to the aerobic coproporphyrinogen-III oxidase family. Homodimer. Requires a divalent metal cation as cofactor.

The protein localises to the cytoplasm. It catalyses the reaction coproporphyrinogen III + O2 + 2 H(+) = protoporphyrinogen IX + 2 CO2 + 2 H2O. The protein operates within porphyrin-containing compound metabolism; protoporphyrin-IX biosynthesis; protoporphyrinogen-IX from coproporphyrinogen-III (O2 route): step 1/1. Functionally, involved in the heme biosynthesis. Catalyzes the aerobic oxidative decarboxylation of propionate groups of rings A and B of coproporphyrinogen-III to yield the vinyl groups in protoporphyrinogen-IX. The polypeptide is Oxygen-dependent coproporphyrinogen-III oxidase (Francisella tularensis subsp. holarctica (strain FTNF002-00 / FTA)).